We begin with the raw amino-acid sequence, 375 residues long: Chaperone protein DnaJ (375 aa).

The 65-residue stretch at 4 to 68 (DYYEILGVSR…ETRARYDRFG (65 aa)) folds into the J domain. Residues 134-216 (GGEKEIRIRH…CGGSGRKQET (83 aa)) form a CR-type zinc finger. Positions 147, 150, 164, 167, 190, 193, 204, and 207 each coordinate Zn(2+). 4 CXXCXGXG motif repeats span residues 147–154 (CQVCEGSG), 164–171 (CSTCSGSG), 190–197 (CPTCNGSG), and 204–211 (CEACGGSG).

Belongs to the DnaJ family. As to quaternary structure, homodimer. The cofactor is Zn(2+).

The protein localises to the cytoplasm. Functionally, participates actively in the response to hyperosmotic and heat shock by preventing the aggregation of stress-denatured proteins and by disaggregating proteins, also in an autonomous, DnaK-independent fashion. Unfolded proteins bind initially to DnaJ; upon interaction with the DnaJ-bound protein, DnaK hydrolyzes its bound ATP, resulting in the formation of a stable complex. GrpE releases ADP from DnaK; ATP binding to DnaK triggers the release of the substrate protein, thus completing the reaction cycle. Several rounds of ATP-dependent interactions between DnaJ, DnaK and GrpE are required for fully efficient folding. Also involved, together with DnaK and GrpE, in the DNA replication of plasmids through activation of initiation proteins. The polypeptide is Chaperone protein DnaJ (Gloeothece citriformis (strain PCC 7424) (Cyanothece sp. (strain PCC 7424))).